The sequence spans 565 residues: Adenine deaminase (565 aa).

This sequence belongs to the metallo-dependent hydrolases superfamily. Adenine deaminase family. Mn(2+) is required as a cofactor.

The enzyme catalyses adenine + H2O + H(+) = hypoxanthine + NH4(+). This chain is Adenine deaminase, found in Cereibacter sphaeroides (strain KD131 / KCTC 12085) (Rhodobacter sphaeroides).